The following is a 117-amino-acid chain: UPF0125 protein VV0820 (117 aa).

The interval 90-117 (RKRAEQAKESGAADPVTGGKPSPLRKAD) is disordered.

This sequence belongs to the UPF0125 (RnfH) family.

The chain is UPF0125 protein VV0820 from Vibrio vulnificus (strain YJ016).